A 433-amino-acid chain; its full sequence is FAD-dependent monooxygenase notI' (433 aa).

FAD-binding residues include Glu-45 and Arg-117. The active site involves Arg-195. Residues Asp-314 and Ala-327 each coordinate FAD.

The protein belongs to the paxM FAD-dependent monooxygenase family. FAD serves as cofactor.

Its pathway is alkaloid biosynthesis. Functionally, FAD-dependent monooxygenase; part of the gene cluster that mediates the biosynthesis of notoamide, a fungal indole alkaloid that belongs to a family of natural products containing a characteristic bicyclo[2.2.2]diazaoctane core. The first step of notoamide biosynthesis involves coupling of L-proline and L-tryptophan by the bimodular NRPS notE', to produce cyclo-L-tryptophan-L-proline called brevianamide F. The reverse prenyltransferase notF' then acts as a deoxybrevianamide E synthase and converts brevianamide F to deoxybrevianamide E via reverse prenylation at C-2 of the indole ring leading to the bicyclo[2.2.2]diazaoctane core. Deoxybrevianamide E is further hydroxylated at C-6 of the indole ring, likely catalyzed by the cytochrome P450 monooxygenase notG', to yield 6-hydroxy-deoxybrevianamide E. 6-hydroxy-deoxybrevianamide E is a specific substrate of the prenyltransferase notC' for normal prenylation at C-7 to produce 6-hydroxy-7-prenyl-deoxybrevianamide, also called notoamide S. As the proposed pivotal branching point in notoamide biosynthesis, notoamide S can be diverted to notoamide E through an oxidative pyran ring closure putatively catalyzed by either notH' cytochrome P450 monooxygenase or the notD' FAD-linked oxidoreductase. This step would be followed by an indole 2,3-epoxidation-initiated pinacol-like rearrangement catalyzed by the notB' FAD-dependent monooxygenase leading to the formation of notoamide C and notoamide D. On the other hand notoamide S is converted to notoamide T by notH' (or notD'), a bifunctional oxidase that also functions as the intramolecular Diels-Alderase responsible for generation of (-)-notoamide T. To generate antipodal (+)-notoaminide T, notH (or notD) in Aspergillus strain MF297-2 is expected to catalyze a Diels-Alder reaction leading to the opposite stereochemistry. The remaining oxidoreductase notD' (or notH') likely catalyzes the oxidative pyran ring formation to yield (-)-stephacidin A. The FAD-dependent monooxygenase notI' is highly similar to notB' and is predicted to catalyze a similar conversion from (-)-stephacidin A to (+)-notoamide B via the 2,3-epoxidation of (-)-stephacidin A followed by a pinacol-type rearrangement. Finally, it remains unclear which enzyme could be responsible for the final hydroxylation steps leading to notoamide A and sclerotiamide. The protein is FAD-dependent monooxygenase notI' of Aspergillus versicolor.